The primary structure comprises 635 residues: Threonine--tRNA ligase (635 aa).

One can recognise a TGS domain in the interval 1–61 (MINISFPDGS…ENDCKLRILT (61 aa)). Residues 242 to 533 (DHRKLGKELD…LIEEYAGCFP (292 aa)) are catalytic. Zn(2+) is bound by residues C333, H384, and H510.

Belongs to the class-II aminoacyl-tRNA synthetase family. As to quaternary structure, homodimer. Zn(2+) is required as a cofactor.

Its subcellular location is the cytoplasm. The enzyme catalyses tRNA(Thr) + L-threonine + ATP = L-threonyl-tRNA(Thr) + AMP + diphosphate + H(+). Catalyzes the attachment of threonine to tRNA(Thr) in a two-step reaction: L-threonine is first activated by ATP to form Thr-AMP and then transferred to the acceptor end of tRNA(Thr). Also edits incorrectly charged L-seryl-tRNA(Thr). In Rickettsia akari (strain Hartford), this protein is Threonine--tRNA ligase.